The sequence spans 130 residues: Large ribosomal subunit protein bL19 (130 aa).

Belongs to the bacterial ribosomal protein bL19 family.

Functionally, this protein is located at the 30S-50S ribosomal subunit interface and may play a role in the structure and function of the aminoacyl-tRNA binding site. The chain is Large ribosomal subunit protein bL19 from Burkholderia orbicola (strain MC0-3).